Here is a 628-residue protein sequence, read N- to C-terminus: Nucleoside-triphosphatase 2 (628 aa).

The signal sequence occupies residues 1–25 (MWLPVYVPLLLVFGVSLSLPHGSLG). Glutamate 236 functions as the Proton acceptor in the catalytic mechanism. N-linked (GlcNAc...) asparagine glycosylation is present at asparagine 432.

The protein belongs to the GDA1/CD39 NTPase family. In terms of assembly, homotetramer.

The protein localises to the secreted. The protein resides in the parasitophorous vacuole. The catalysed reaction is a ribonucleoside 5'-triphosphate + H2O = a ribonucleoside 5'-diphosphate + phosphate + H(+). Its function is as follows. May perform an important processing step in the conversion of high energy nucleotides prior to uptake by the parasite. NTPAse-II has a specific activity 4.5-fold lower than NTPAse-I in hydrolysis of ATP. The primary difference between these isozymes lies in their ability to hydrolyze nucleoside triphosphate versus diphosphate substrates. While NTPAse-II hydrolyzes ATP to ADP and ADP to AMP at almost the same rate, NTPAse-I hydrolyzes ADP to AMP at a much slower rate (0.7% of the rate for ATP). The sequence is that of Nucleoside-triphosphatase 2 (NTP1) from Toxoplasma gondii.